A 177-amino-acid polypeptide reads, in one-letter code: Peptide methionine sulfoxide reductase MsrA 2 (177 aa).

Cys12 is a catalytic residue.

The protein belongs to the MsrA Met sulfoxide reductase family.

It carries out the reaction L-methionyl-[protein] + [thioredoxin]-disulfide + H2O = L-methionyl-(S)-S-oxide-[protein] + [thioredoxin]-dithiol. The enzyme catalyses [thioredoxin]-disulfide + L-methionine + H2O = L-methionine (S)-S-oxide + [thioredoxin]-dithiol. Its function is as follows. Has an important function as a repair enzyme for proteins that have been inactivated by oxidation. Catalyzes the reversible oxidation-reduction of methionine sulfoxide in proteins to methionine. This is Peptide methionine sulfoxide reductase MsrA 2 (msrA2) from Staphylococcus aureus (strain Mu50 / ATCC 700699).